The chain runs to 557 residues: Urocanate hydratase (557 aa).

NAD(+)-binding positions include 53 to 54 (GG), glutamine 131, 177 to 179 (GMG), glutamate 197, arginine 202, 243 to 244 (NA), 264 to 268 (QTSAH), 274 to 275 (YL), and tyrosine 323. Cysteine 411 is an active-site residue. Positions 445 to 464 (LDSGSVSSPNRETESMRDGS) are disordered. The span at 455–464 (RETESMRDGS) shows a compositional bias: basic and acidic residues. Glycine 493 contacts NAD(+).

The protein belongs to the urocanase family. Requires NAD(+) as cofactor.

It localises to the cytoplasm. The enzyme catalyses 4-imidazolone-5-propanoate = trans-urocanate + H2O. It participates in amino-acid degradation; L-histidine degradation into L-glutamate; N-formimidoyl-L-glutamate from L-histidine: step 2/3. Functionally, catalyzes the conversion of urocanate to 4-imidazolone-5-propionate. In Pseudomonas putida (strain W619), this protein is Urocanate hydratase.